Consider the following 491-residue polypeptide: Nuatigenin 3-beta-glucosyltransferase (491 aa).

Histidine 20 acts as the Proton acceptor in catalysis. Histidine 20 serves as a coordination point for an anthocyanidin. Aspartate 125 acts as the Charge relay in catalysis. Residues alanine 352, glutamine 354, histidine 369, tryptophan 372, asparagine 373, serine 374, and glutamate 377 each coordinate UDP-alpha-D-glucose. Alanine 392 serves as a coordination point for an anthocyanidin. Positions 393 and 394 each coordinate UDP-alpha-D-glucose.

This sequence belongs to the UDP-glycosyltransferase family. As to expression, expressed in roots, stems and leaves.

It catalyses the reaction nuatigenin + UDP-alpha-D-glucose = nuatigenin 3-beta-D-glucopyranoside + UDP + H(+). The catalysed reaction is diosgenin + UDP-alpha-D-glucose = diosgenin 3-O-beta-D-glucoside + UDP + H(+). It carries out the reaction tigogenin + UDP-alpha-D-glucose = tigogenin 3-O-beta-D-glucopyranoside + UDP + H(+). The enzyme catalyses solasodine + UDP-alpha-D-glucose = solasodine 3-beta-D-glucoside + UDP + H(+). It catalyses the reaction solanidine + UDP-alpha-D-glucose = solanidine 3-O-beta-D-glucopyranoside + UDP + H(+). The catalysed reaction is tomatidine + UDP-alpha-D-glucose = tomatidine 3-O-beta-D-glucopyranoside + UDP + H(+). Glucosyltransferase involved in steroid saponin biosynthesis. Catalyzes the 3-O-glucosylation of steroidal sapogenins, such as diosgenin, nuatigenin and tigogenin. Can glucosylate steroidal alkaloids, such as solanidine, solasodine and tomatidine. This chain is Nuatigenin 3-beta-glucosyltransferase, found in Solanum aculeatissimum (Dutch eggplant).